Here is a 2017-residue protein sequence, read N- to C-terminus: Protein cbp-1 (2017 aa).

Positions M1–S13 are enriched in basic and acidic residues. A disordered region spans residues M1–Q182. Low complexity-rich tracts occupy residues A21–A30 and Q78–N90. Polar residues predominate over residues N106–R116. A compositionally biased stretch (low complexity) spans M141 to P151. Over residues G152–G164 the composition is skewed to pro residues. The span at Q165–Q182 shows a compositional bias: low complexity. Symmetric dimethylarginine; by PRMT5; in vitro is present on R234. The segment at S307–Q398 is disordered. A compositionally biased stretch (low complexity) spans Q340–Q379. The TAZ-type 1 zinc-finger motif lies at D399 to L505. Disordered regions lie at residues E558–D593 and G706–F864. Residues G559–G573 show a composition bias toward low complexity. Residues D593–Q672 form the KIX domain. Residues P721–A773 show a composition bias toward polar residues. Residues K834 to P854 are compositionally biased toward basic and acidic residues. The 107-residue stretch at F864–V970 folds into the Bromo domain. Interaction with histone regions lie at residues D902–K948 and Y1224–D1226. The region spanning K1112–S1492 is the CBP/p300-type HAT domain. Acetyl-CoA-binding positions include L1225–S1227, R1237–T1238, I1284, R1289, and W1293. Residues N1349–E1358 show a composition bias toward basic and acidic residues. The segment at N1349 to S1401 is disordered. Over residues K1378–A1399 the composition is skewed to basic residues. A ZZ-type zinc finger spans residues G1494–G1540. Residues C1499, C1502, C1510, C1513, C1519, C1522, H1528, and H1530 each contribute to the Zn(2+) site. Residues G1550 to I1631 form a TAZ-type 2 zinc finger. Disordered stretches follow at residues G1656–R1828 and S1908–Q2017. The segment covering T1667–N1678 has biased composition (polar residues). A compositionally biased stretch (low complexity) spans Q1699–S1708. The segment covering P1748–Y1757 has biased composition (polar residues). 2 stretches are compositionally biased toward low complexity: residues M1793 to G1812 and S1908 to A1932. Residues Q1943 to M1962 are compositionally biased toward polar residues. The span at Q1963–Q2017 shows a compositional bias: low complexity.

Interacts (via N-terminus domain and HAT domain) with prmt-5; the interaction results in methylation of cbp-1. Interacts (via HAT domain) with cep-1; cep-1 transcriptional activity may be inhibited by interaction with methylated cbp-1. Component of a complex that contains prmt-5 and cbp-1. Post-translationally, methylation by prmt-5 may repress the capacity of cbp-1 to enhance cep-1-dependent transcription of egl-1.

Its subcellular location is the nucleus. The catalysed reaction is L-lysyl-[protein] + acetyl-CoA = N(6)-acetyl-L-lysyl-[protein] + CoA + H(+). Functionally, acetyltransferase enzyme. Acetylates histones, giving a specific tag for transcriptional activation. May prevent DNA damage-induced apoptosis by inhibiting cep-1-dependent transcription activation of the programmed cell death activator egl-1. In differentiated cells, negatively regulates localization of heterochromatin to the nuclear periphery. Plays a role in migration of gonadal distal tip cells, where it probably modulates expression of genes involved in integrin-mediated adhesion. This chain is Protein cbp-1 (cbp-1), found in Caenorhabditis elegans.